The primary structure comprises 521 residues: Probable protein kinase UbiB (521 aa).

The region spanning 119 to 497 is the Protein kinase domain; sequence SFDRQPVASA…QKRTNRLLQS (379 aa). Residues 125–133 and Lys151 contribute to the ATP site; that span reads VASASIAQV. Asp286 (proton acceptor) is an active-site residue. Residues 496 to 516 form a helical membrane-spanning segment; it reads QSLIYGGLGFVLGLLVMQLFV.

Belongs to the ABC1 family. UbiB subfamily.

Its subcellular location is the cell inner membrane. It functions in the pathway cofactor biosynthesis; ubiquinone biosynthesis [regulation]. Functionally, is probably a protein kinase regulator of UbiI activity which is involved in aerobic coenzyme Q (ubiquinone) biosynthesis. This chain is Probable protein kinase UbiB, found in Acidovorax sp. (strain JS42).